The primary structure comprises 27 residues: Conotoxin Bt9.2 (27 aa).

Disulfide bonds link C2–C16, C6–C19, and C12–C24. The residue at position 13 (P13) is a 4-hydroxyproline.

As to expression, expressed by the venom duct.

It localises to the secreted. In terms of biological role, probable neurotoxin that inhibits ion channels. In Conus betulinus (Beech cone), this protein is Conotoxin Bt9.2.